Consider the following 86-residue polypeptide: MENFDKTMKFDYEELPTQDVRDVLNNVYRTLDERGYNAVNQIVGYLLSGDPAYIPRQNEARNQIRHIDRDVIMEELVSYYLKEQNK.

This sequence belongs to the UPF0297 family.

The sequence is that of UPF0297 protein SAHV_1604 from Staphylococcus aureus (strain Mu3 / ATCC 700698).